Here is a 231-residue protein sequence, read N- to C-terminus: MVKLVFARHGESEWNKANLFTGWADVDLSEKGTQQAIDAGKLIKEAGIEFDLAFTSVLTRAIKTTNLALENAGQLWVPTEKSWRLNERHYGALTGKNKAEAAEQFGDEQVHIWRRSYDVLPPAMAKDDEYSAHKDRRYADLDPALIPDAENLKVTLERAMPYWEEKIAPALLDGKNVFVGAHGNSIRALVKHIKGLSDDEIMDVEIPNFPPLVFELDEKLNIVKEYYLGGE.

Residues 8 to 15 (RHGESEWN), 21 to 22 (TG), arginine 60, 87 to 90 (ERHY), lysine 98, 114 to 115 (RR), and 183 to 184 (GN) each bind substrate. Catalysis depends on histidine 9, which acts as the Tele-phosphohistidine intermediate. The active-site Proton donor/acceptor is the glutamate 87.

Belongs to the phosphoglycerate mutase family. BPG-dependent PGAM subfamily.

It catalyses the reaction (2R)-2-phosphoglycerate = (2R)-3-phosphoglycerate. The protein operates within carbohydrate degradation; glycolysis; pyruvate from D-glyceraldehyde 3-phosphate: step 3/5. Catalyzes the interconversion of 2-phosphoglycerate and 3-phosphoglycerate. The polypeptide is 2,3-bisphosphoglycerate-dependent phosphoglycerate mutase (Streptococcus pyogenes serotype M49 (strain NZ131)).